The primary structure comprises 208 residues: Small ribosomal subunit protein uS5 (208 aa).

An S5 DRBM domain is found at Leu28–Val91.

This sequence belongs to the universal ribosomal protein uS5 family. As to quaternary structure, part of the 30S ribosomal subunit. Contacts proteins S4 and S8.

Functionally, with S4 and S12 plays an important role in translational accuracy. Located at the back of the 30S subunit body where it stabilizes the conformation of the head with respect to the body. The polypeptide is Small ribosomal subunit protein uS5 (Aquifex aeolicus (strain VF5)).